The sequence spans 289 residues: Oxaloacetate decarboxylase (289 aa).

Serine 47 lines the substrate pocket. Residue aspartate 85 coordinates Mg(2+). Substrate-binding residues include arginine 156 and histidine 232.

Belongs to the isocitrate lyase/PEP mutase superfamily. Oxaloacetate decarboxylase family. As to quaternary structure, homotetramer; dimer of dimers. Mg(2+) serves as cofactor.

The catalysed reaction is oxaloacetate + H(+) = pyruvate + CO2. Its function is as follows. Catalyzes the decarboxylation of oxaloacetate into pyruvate. Seems to play a role in maintaining cellular concentrations of bicarbonate and pyruvate. This Rhodopseudomonas palustris (strain BisA53) protein is Oxaloacetate decarboxylase.